Reading from the N-terminus, the 445-residue chain is Ribosomal protein uS12 methylthiotransferase RimO (445 aa).

The 116-residue stretch at 4–119 (IKVALVSLGC…LLESIKVFLK (116 aa)) folds into the MTTase N-terminal domain. Residues Cys13, Cys48, Cys82, Cys156, Cys160, and Cys163 each contribute to the [4Fe-4S] cluster site. The Radical SAM core domain maps to 142-372 (TTPTYTAYVR…MILQQSISKD (231 aa)). The region spanning 375 to 441 (KEKIGKIYEV…EYDLIGVVYN (67 aa)) is the TRAM domain.

The protein belongs to the methylthiotransferase family. RimO subfamily. [4Fe-4S] cluster is required as a cofactor.

It is found in the cytoplasm. It carries out the reaction L-aspartate(89)-[ribosomal protein uS12]-hydrogen + (sulfur carrier)-SH + AH2 + 2 S-adenosyl-L-methionine = 3-methylsulfanyl-L-aspartate(89)-[ribosomal protein uS12]-hydrogen + (sulfur carrier)-H + 5'-deoxyadenosine + L-methionine + A + S-adenosyl-L-homocysteine + 2 H(+). Functionally, catalyzes the methylthiolation of an aspartic acid residue of ribosomal protein uS12. In Clostridium botulinum (strain Okra / Type B1), this protein is Ribosomal protein uS12 methylthiotransferase RimO.